Reading from the N-terminus, the 138-residue chain is Large ribosomal subunit protein bL19 (138 aa).

The protein belongs to the bacterial ribosomal protein bL19 family.

This protein is located at the 30S-50S ribosomal subunit interface and may play a role in the structure and function of the aminoacyl-tRNA binding site. This is Large ribosomal subunit protein bL19 from Rickettsia felis (strain ATCC VR-1525 / URRWXCal2) (Rickettsia azadi).